Reading from the N-terminus, the 139-residue chain is Large ribosomal subunit protein uL16 (139 aa).

Belongs to the universal ribosomal protein uL16 family. In terms of assembly, part of the 50S ribosomal subunit.

In terms of biological role, binds 23S rRNA and is also seen to make contacts with the A and possibly P site tRNAs. The polypeptide is Large ribosomal subunit protein uL16 (Chlorobium luteolum (strain DSM 273 / BCRC 81028 / 2530) (Pelodictyon luteolum)).